Consider the following 85-residue polypeptide: CRISPR-associated endoribonuclease Cas2 (85 aa).

Asp8 provides a ligand contact to Mg(2+).

It belongs to the CRISPR-associated endoribonuclease Cas2 protein family. Homodimer, forms a heterotetramer with a Cas1 homodimer. Requires Mg(2+) as cofactor.

Its function is as follows. CRISPR (clustered regularly interspaced short palindromic repeat), is an adaptive immune system that provides protection against mobile genetic elements (viruses, transposable elements and conjugative plasmids). CRISPR clusters contain sequences complementary to antecedent mobile elements and target invading nucleic acids. CRISPR clusters are transcribed and processed into CRISPR RNA (crRNA). Functions as a ssRNA-specific endoribonuclease. Involved in the integration of spacer DNA into the CRISPR cassette. The chain is CRISPR-associated endoribonuclease Cas2 from Thermococcus kodakarensis (strain ATCC BAA-918 / JCM 12380 / KOD1) (Pyrococcus kodakaraensis (strain KOD1)).